Here is a 286-residue protein sequence, read N- to C-terminus: ATP synthase gamma chain (286 aa).

Belongs to the ATPase gamma chain family. F-type ATPases have 2 components, CF(1) - the catalytic core - and CF(0) - the membrane proton channel. CF(1) has five subunits: alpha(3), beta(3), gamma(1), delta(1), epsilon(1). CF(0) has three main subunits: a, b and c.

It localises to the cell inner membrane. Produces ATP from ADP in the presence of a proton gradient across the membrane. The gamma chain is believed to be important in regulating ATPase activity and the flow of protons through the CF(0) complex. The chain is ATP synthase gamma chain from Christiangramia forsetii (strain DSM 17595 / CGMCC 1.15422 / KT0803) (Gramella forsetii).